Reading from the N-terminus, the 64-residue chain is DNA-binding protein 7b (64 aa).

Belongs to the 7 kDa DNA-binding/endoribonuclease P2 family. Monomer.

Its subcellular location is the cytoplasm. Its function is as follows. Can constrain negative DNA supercoils. May be involved in maintaining the integrity of the genome at high temperature. In Saccharolobus islandicus (strain HVE10/4) (Sulfolobus islandicus), this protein is DNA-binding protein 7b.